Here is a 364-residue protein sequence, read N- to C-terminus: ERCC4 domain-containing protein EP364R (364 aa).

Positions 3-102 (FLVADHREHH…QLYFFVEGPA (100 aa)) constitute an ERCC4 domain. Residues 319 to 328 (ASRPATQPAA) show a composition bias toward polar residues. The disordered stretch occupies residues 319–352 (ASRPATQPAATQPLHEVSDDATSNASDTSSPIGH). The segment covering 338 to 348 (DATSNASDTSS) has biased composition (low complexity).

This sequence belongs to the asfivirus EP364R family.

Plays a role in the inhibition of type I interferon signaling pathway. Mechanistically, specifically interacts with 2',3'-cGAMP and cleaves it via its phosphodiesterase activity. In turn, prevents 2',3'-cGAMP interaction with host ER-resident STING1 leading to inhibition of downstream signaling pathway and type I interferon production. In African swine fever virus (strain Badajoz 1971 Vero-adapted) (Ba71V), this protein is ERCC4 domain-containing protein EP364R.